Here is a 245-residue protein sequence, read N- to C-terminus: 1-(5-phosphoribosyl)-5-[(5-phosphoribosylamino)methylideneamino] imidazole-4-carboxamide isomerase (245 aa).

Aspartate 7 functions as the Proton acceptor in the catalytic mechanism. Aspartate 129 functions as the Proton donor in the catalytic mechanism.

The protein belongs to the HisA/HisF family.

The protein localises to the cytoplasm. It catalyses the reaction 1-(5-phospho-beta-D-ribosyl)-5-[(5-phospho-beta-D-ribosylamino)methylideneamino]imidazole-4-carboxamide = 5-[(5-phospho-1-deoxy-D-ribulos-1-ylimino)methylamino]-1-(5-phospho-beta-D-ribosyl)imidazole-4-carboxamide. It functions in the pathway amino-acid biosynthesis; L-histidine biosynthesis; L-histidine from 5-phospho-alpha-D-ribose 1-diphosphate: step 4/9. The chain is 1-(5-phosphoribosyl)-5-[(5-phosphoribosylamino)methylideneamino] imidazole-4-carboxamide isomerase from Aliivibrio salmonicida (strain LFI1238) (Vibrio salmonicida (strain LFI1238)).